A 210-amino-acid polypeptide reads, in one-letter code: Helix-loop-helix protein 26 (210 aa).

Residues 1 to 15 show a composition bias toward low complexity; sequence MSSSPTSSSSGSPSS. A disordered region spans residues 1-33; the sequence is MSSSPTSSSSGSPSSHGHRSETEKQRRDDTNDL. Residues 14-65 form the bHLH domain; the sequence is SSHGHRSETEKQRRDDTNDLLNEFKKIVQKSESEKLSKEEVLFRIVKLLSGI. Residues 18 to 33 show a composition bias toward basic and acidic residues; that stretch reads HRSETEKQRRDDTNDL.

In terms of assembly, homodimer; binds to DNA as a homodimer. Expressed in intestinal cells (at protein level).

It localises to the nucleus. Its function is as follows. As a homodimer binds DNA via the E-box sequence 5'-CACGTG-3'. Represses lag-2 transcription during embryogenesis via Notch signaling, in an unc-37-dependent manner. Also represses tbx-37 independent of Notch signaling. In the intestine, plays a role in probiotic-mediated protection against infections by pathogens such as S.enterica. This is most likely by positively regulating the expression of genes such as bar-1 upon exposure to probiotic bacteria such as the E.faecium. This is Helix-loop-helix protein 26 from Caenorhabditis elegans.